Consider the following 334-residue polypeptide: Cathepsin J (334 aa).

The N-terminal stretch at 1-17 (MTPTVLLLILCFGVASG) is a signal peptide. A propeptide spans 18–113 (AQAHDPKLDA…PHAQNHVSIG (96 aa)) (activation peptide). An N-linked (GlcNAc...) asparagine glycan is attached at N72. 2 disulfides stabilise this stretch: C135–C178 and C169–C211. The active site involves C138. Residues N217, N221, and N268 are each glycosylated (N-linked (GlcNAc...) asparagine). A disulfide bridge connects residues C269 and C322. Active-site residues include H276 and N300.

The protein belongs to the peptidase C1 family. Expressed specifically in placenta.

The protein localises to the lysosome. This Mus musculus (Mouse) protein is Cathepsin J (Ctsj).